Here is a 119-residue protein sequence, read N- to C-terminus: Large ribosomal subunit protein bL20 (119 aa).

It belongs to the bacterial ribosomal protein bL20 family.

Its function is as follows. Binds directly to 23S ribosomal RNA and is necessary for the in vitro assembly process of the 50S ribosomal subunit. It is not involved in the protein synthesizing functions of that subunit. This Burkholderia cenocepacia (strain HI2424) protein is Large ribosomal subunit protein bL20.